The sequence spans 264 residues: tRNA pseudouridine synthase A (264 aa).

Catalysis depends on Asp-51, which acts as the Nucleophile. Position 109 (Tyr-109) interacts with substrate.

Belongs to the tRNA pseudouridine synthase TruA family. Homodimer.

The catalysed reaction is uridine(38/39/40) in tRNA = pseudouridine(38/39/40) in tRNA. Formation of pseudouridine at positions 38, 39 and 40 in the anticodon stem and loop of transfer RNAs. This is tRNA pseudouridine synthase A from Photorhabdus laumondii subsp. laumondii (strain DSM 15139 / CIP 105565 / TT01) (Photorhabdus luminescens subsp. laumondii).